The sequence spans 164 residues: UPF0114 protein YqhA (164 aa).

3 helical membrane-spanning segments follow: residues 15 to 35, 53 to 73, and 136 to 156; these read LLAPVYFGLSLALVALALKFF, LILVLLSLVDMTLVGGLLVMV, and LMWYVIIHLTFVLSAFVMGYL.

The protein belongs to the UPF0114 family.

It is found in the cell membrane. The protein is UPF0114 protein YqhA of Escherichia coli O139:H28 (strain E24377A / ETEC).